We begin with the raw amino-acid sequence, 307 residues long: UDP-3-O-acyl-N-acetylglucosamine deacetylase (307 aa).

Zn(2+) contacts are provided by histidine 78, histidine 237, and aspartate 241. Catalysis depends on histidine 264, which acts as the Proton donor.

This sequence belongs to the LpxC family. The cofactor is Zn(2+).

The enzyme catalyses a UDP-3-O-[(3R)-3-hydroxyacyl]-N-acetyl-alpha-D-glucosamine + H2O = a UDP-3-O-[(3R)-3-hydroxyacyl]-alpha-D-glucosamine + acetate. It functions in the pathway glycolipid biosynthesis; lipid IV(A) biosynthesis; lipid IV(A) from (3R)-3-hydroxytetradecanoyl-[acyl-carrier-protein] and UDP-N-acetyl-alpha-D-glucosamine: step 2/6. Its function is as follows. Catalyzes the hydrolysis of UDP-3-O-myristoyl-N-acetylglucosamine to form UDP-3-O-myristoylglucosamine and acetate, the committed step in lipid A biosynthesis. The chain is UDP-3-O-acyl-N-acetylglucosamine deacetylase from Azoarcus sp. (strain BH72).